A 1350-amino-acid chain; its full sequence is Probable serine/threonine-protein kinase DDB_G0278845 (1350 aa).

Disordered stretches follow at residues 66-109, 121-159, 179-249, 270-296, 337-396, 431-506, 525-596, and 612-701; these read RELN…NNIR, ENGL…PKGL, LANN…LNSI, SSIN…NEYS, NNYN…RDDL, GSTI…EKKK, NDSN…IPTP, and NNNS…NTNE. Polar residues predominate over residues 84–98; it reads KYLTSSHSSVVIPQD. Composition is skewed to low complexity over residues 127 to 140 and 181 to 210; these read SPTS…TPTT and NNNN…NNSN. A compositionally biased stretch (polar residues) spans 211–222; sequence KISRLINNSNTT. Over residues 223–235 the composition is skewed to low complexity; sequence DSNASIRSSNNNN. Residues 236–246 show a composition bias toward acidic residues; sequence DDFDNNDDEDL. Composition is skewed to low complexity over residues 270-293 and 337-391; these read SSIN…DNVN and NNYN…GYNN. Residues 431 to 443 show a composition bias toward polar residues; it reads GSTIFTSTSSDIA. Residues 454–482 show a composition bias toward acidic residues; that stretch reads NENENENENENENENENDNDSDSENENEN. 2 stretches are compositionally biased toward low complexity: residues 483 to 495 and 525 to 551; these read DNSI…KSNS and NDSN…PFSP. Positions 565–592 are enriched in polar residues; the sequence is PKPTLQRQRSNSKNVLYSPNASPSNSCK. Composition is skewed to low complexity over residues 612–637, 645–679, and 690–701; these read NNNS…NNID, NNNN…NNNN, and KKTPNNKINTNE. A Protein kinase domain is found at 756–1082; that stretch reads FTLIEKIGEG…VENIKNHIFF (327 aa). ATP-binding positions include 762–770 and Lys785; that span reads IGEGGFGQV. The active-site Proton acceptor is Asp880. Residues 1083-1203 enclose the AGC-kinase C-terminal domain; the sequence is NGVPWGKLHD…PRADDQPLLW (121 aa). Disordered regions lie at residues 1129–1159, 1190–1219, 1232–1285, and 1300–1350; these read SLLP…NDKM, GFTY…NNNN, NNNN…NKTV, and NCNN…KQQQ. Residues 1131–1142 show a composition bias toward pro residues; it reads LPPPLPPPPQTP. 3 stretches are compositionally biased toward low complexity: residues 1204-1219, 1232-1283, and 1300-1313; these read NNNN…NNNN, NNNN…SNNK, and NCNN…NNIN. Composition is skewed to polar residues over residues 1314–1330 and 1338–1350; these read TGNL…SGEN and PTSP…KQQQ.

Belongs to the protein kinase superfamily. AGC Ser/Thr protein kinase family.

It catalyses the reaction L-seryl-[protein] + ATP = O-phospho-L-seryl-[protein] + ADP + H(+). It carries out the reaction L-threonyl-[protein] + ATP = O-phospho-L-threonyl-[protein] + ADP + H(+). The polypeptide is Probable serine/threonine-protein kinase DDB_G0278845 (Dictyostelium discoideum (Social amoeba)).